The following is a 1139-amino-acid chain: Tip attachment protein J (1139 aa).

The protein belongs to the Caudoviricetes tip attachment protein J family. Ubiquitinated by the Bil antiviral defense system when the Bil system is expressed in E.coli MG1655 and infected with this virus, or when this protein is expressed in a strain with the Bil system.

The protein resides in the virion. The protein localises to the host cytoplasm. Its function is as follows. Attaches the virion to the host receptor, inducing viral DNA ejection. During tail assembly, initiates distal tail tip assembly. During virus entry to host cell, binds strongly to host receptor in an irreversible attachment. The binding induces structural changes in the tail leading to viral DNA injection. This chain is Tip attachment protein J, found in Escherichia phage SECphi4.